The following is a 435-amino-acid chain: Putative F-box/kelch-repeat protein At1g13200 (435 aa).

Residues 1-29 (MKDAEKREVIASSSLQRKRNRGRRLRKRR) form a disordered region. Positions 16-29 (QRKRNRGRRLRKRR) are enriched in basic residues. The 46-residue stretch at 37–82 (LMVPSSLPNDVLEEIFLRFPVKALIRLKSLSKQWRSTIESRSFEER) folds into the F-box domain. Kelch repeat units follow at residues 164 to 217 (SVYV…DYKL), 224 to 270 (DKYI…PASA), 273 to 317 (SVYW…HIDM), and 322 to 368 (NSLC…EKRD).

The polypeptide is Putative F-box/kelch-repeat protein At1g13200 (Arabidopsis thaliana (Mouse-ear cress)).